Consider the following 448-residue polypeptide: Protein TraN (448 aa).

2 disordered regions span residues 243–273 (NRVGASRTATTARAGQQQSPAVKQSSGNSGE) and 411–448 (EAARRHQALMRKQEQEKKQAQERERGRSQSLGLSNKPS). Residues 246–261 (GASRTATTARAGQQQS) are compositionally biased toward low complexity. Polar residues predominate over residues 262–271 (PAVKQSSGNS). The span at 421–437 (RKQEQEKKQAQERERGR) shows a compositional bias: basic and acidic residues. Polar residues predominate over residues 438-448 (SQSLGLSNKPS).

The protein to H.influenzae HI_1407.

This is Protein TraN (traN) from Escherichia coli.